The primary structure comprises 406 residues: Nicotinate phosphoribosyltransferase (406 aa).

H227 is modified (phosphohistidine; by autocatalysis).

Belongs to the NAPRTase family. Transiently phosphorylated on a His residue during the reaction cycle. Phosphorylation strongly increases the affinity for substrates and increases the rate of nicotinate D-ribonucleotide production. Dephosphorylation regenerates the low-affinity form of the enzyme, leading to product release.

It carries out the reaction nicotinate + 5-phospho-alpha-D-ribose 1-diphosphate + ATP + H2O = nicotinate beta-D-ribonucleotide + ADP + phosphate + diphosphate. The protein operates within cofactor biosynthesis; NAD(+) biosynthesis; nicotinate D-ribonucleotide from nicotinate: step 1/1. Catalyzes the synthesis of beta-nicotinate D-ribonucleotide from nicotinate and 5-phospho-D-ribose 1-phosphate at the expense of ATP. The sequence is that of Nicotinate phosphoribosyltransferase from Methanosarcina mazei (strain ATCC BAA-159 / DSM 3647 / Goe1 / Go1 / JCM 11833 / OCM 88) (Methanosarcina frisia).